A 121-amino-acid polypeptide reads, in one-letter code: Griffithsin (121 aa).

The Jacalin-type lectin domain occupies 1–120 (SLTHRKFGGS…LDSLDIYYEQ (120 aa)).

Mixed specificity lectin with anti-HIV activity. Binds to HIV envelope glycoproteins, including exterior membrane glycoprotein gp120, and inhibits viral entry into cells. Binding to gp120 is dependent on gp120 being glycosylated, and is inhibited by mannose, glucose and N-acetylglucosamine. The polypeptide is Griffithsin (Griffithsia sp. (strain Q66D336) (Red alga)).